Here is a 546-residue protein sequence, read N- to C-terminus: Chaperonin GroEL (546 aa).

Residues 30-33, Lys-51, 87-91, Gly-415, 479-481, and Asp-495 contribute to the ATP site; these read TLGP, DGTTT, and NAA. Residues 527–546 form a disordered region; the sequence is DESAAPAMPGGMGGMGDMGM. The segment covering 536–546 has biased composition (gly residues); it reads GGMGGMGDMGM.

It belongs to the chaperonin (HSP60) family. In terms of assembly, forms a cylinder of 14 subunits composed of two heptameric rings stacked back-to-back. Interacts with the co-chaperonin GroES.

The protein localises to the cytoplasm. It carries out the reaction ATP + H2O + a folded polypeptide = ADP + phosphate + an unfolded polypeptide.. In terms of biological role, together with its co-chaperonin GroES, plays an essential role in assisting protein folding. The GroEL-GroES system forms a nano-cage that allows encapsulation of the non-native substrate proteins and provides a physical environment optimized to promote and accelerate protein folding. In Acidovorax ebreus (strain TPSY) (Diaphorobacter sp. (strain TPSY)), this protein is Chaperonin GroEL.